The chain runs to 206 residues: Glycerol-3-phosphate acyltransferase (206 aa).

Transmembrane regions (helical) follow at residues 3–23 (LSLI…VIIG), 47–67 (VLGP…GTLA), 79–99 (HSLV…SIFL), 119–139 (PLFF…TSMV), and 152–172 (ILSF…VLIF).

The protein belongs to the PlsY family. As to quaternary structure, probably interacts with PlsX.

It localises to the cell membrane. It catalyses the reaction an acyl phosphate + sn-glycerol 3-phosphate = a 1-acyl-sn-glycero-3-phosphate + phosphate. It functions in the pathway lipid metabolism; phospholipid metabolism. Functionally, catalyzes the transfer of an acyl group from acyl-phosphate (acyl-PO(4)) to glycerol-3-phosphate (G3P) to form lysophosphatidic acid (LPA). This enzyme utilizes acyl-phosphate as fatty acyl donor, but not acyl-CoA or acyl-ACP. The sequence is that of Glycerol-3-phosphate acyltransferase from Latilactobacillus sakei subsp. sakei (strain 23K) (Lactobacillus sakei subsp. sakei).